We begin with the raw amino-acid sequence, 1244 residues long: DNA polymerase beta (1244 aa).

A run of 13 repeats spans residues 1069 to 1072 (AGNP), 1073 to 1076 (AGNP), 1077 to 1080 (AGNP), 1081 to 1084 (AGNP), 1085 to 1088 (AGNP), 1089 to 1092 (AGNP), 1093 to 1096 (AGNP), 1097 to 1100 (AGNP), 1101 to 1104 (AGNP), 1105 to 1108 (AGNP), 1109 to 1112 (AGNP), 1113 to 1116 (AGNP), and 1117 to 1120 (AGNP). The tract at residues 1069 to 1118 (AGNPAGNPAGNPAGNPAGNPAGNPAGNPAGNPAGNPAGNPAGNPAGNPAG) is disordered. Residues 1069–1120 (AGNPAGNPAGNPAGNPAGNPAGNPAGNPAGNPAGNPAGNPAGNPAGNPAGNP) form a 13 X 4 AA tandem repeats of A-G-N-P region.

This sequence belongs to the DNA polymerase type-B family.

It catalyses the reaction DNA(n) + a 2'-deoxyribonucleoside 5'-triphosphate = DNA(n+1) + diphosphate. Its function is as follows. DNA-directed DNA polymerase involved in viral DNA replication. This African swine fever virus (isolate Pig/Portugal/Lis 60/1960) (ASFV) protein is DNA polymerase beta (DPOL).